The following is a 412-amino-acid chain: POU domain, class 4, transcription factor 2 (412 aa).

The disordered stretch occupies residues 29-96 (LHSASPGSSA…SEAMRRACLP (68 aa)). Residues 31–53 (SASPGSSAPAAPSASSPSSSSNA) show a composition bias toward low complexity. Gly residues-rich tracts occupy residues 54 to 70 (GSGGGGGGGGGGGGGGR) and 78 to 87 (GSGGGGGGGS). Positions 94–240 (CLPTPPSNIF…MHQAALSMAH (147 aa)) are required for transcriptional activation. A POU-IV box motif is present at residues 113 to 122 (RAEALAAVDI). The interval 123–191 (VSQSKSHHHH…HHHHQPHQAL (69 aa)) is disordered. Positions 127–138 (KSHHHHPPHHSP) are enriched in basic residues. The segment covering 152–169 (PCTSAASSSSVPISHPSA) has biased composition (low complexity). Residues 173–187 (THHHHHHHHHHHHQP) are compositionally biased toward basic residues. The Nuclear speckle targeting signal signature appears at 174–188 (HHHHHHHHHHHHQPH). Residues 241–412 (AHGLPSHMGC…QKRMKYSAGI (172 aa)) are required for DNA-binding and transcriptional repression. The region spanning 253–330 (DVDADPRDLE…ILQAWLEEAE (78 aa)) is the POU-specific domain. The homeobox DNA-binding region spans 348–407 (KKRKRTSIAAPEKRSLEAYFAIQPRPSSEKIAAIAEKLDLKKNVVRVWFCNQRQKQKRMK).

This sequence belongs to the POU transcription factor family. Class-4 subfamily. Interacts with POU4F1; this interaction inhibits both POU4F1 DNA-binding and transcriptional activities. Interacts (C-terminus) with ESR1 (via DNA-binding domain); this interaction increases the estrogen receptor ESR1 transcriptional activity in a DNA- and ligand 17-beta-estradiol-independent manner. Interacts (via C-terminus) with TP53 (via N-terminus). Interacts with DLX1 (via homeobox DNA-binding domain); this interaction suppresses DLX1-mediated transcriptional activity in postnatal retina enhancing retinal ganglion cell (RGC) differentiation. Interacts with DLX2 (via homeobox DNA-binding domain); this interaction enhances RGC differentiation. Interacts (via C-terminus) with ISL1 (via C-terminus). Interacts with ISL2. Interacts with LHX2. Expressed in the heart, brain and spinal cord. Expressed in cardiomyocytes (at protein level). Expressed in brain and spinal cord. Expressed in dorsal root ganglion (RGD) neurons.

Its subcellular location is the nucleus. The protein resides in the nucleus speckle. The protein localises to the cytoplasm. In terms of biological role, tissue-specific DNA-binding transcription factor involved in the development and differentiation of target cells. Functions either as activator or repressor modulating the rate of target gene transcription through RNA polymerase II enzyme in a promoter-dependent manner. Binds to the consensus octamer motif 5'-AT[A/T]A[T/A]T[A/T]A-3' of promoter of target genes. Plays a fundamental role in the gene regulatory network essential for retinal ganglion cell (RGC) differentiation. Binds to an octamer site to form a ternary complex with ISL1; cooperates positively with ISL1 and ISL2 to potentiate transcriptional activation of RGC target genes being involved in RGC fate commitment in the developing retina and RGC axon formation and pathfinding. Inhibits DLX1 and DLX2 transcriptional activities preventing DLX1- and DLX2-mediated ability to promote amacrine cell fate specification. In cooperation with TP53 potentiates transcriptional activation of BAX promoter activity increasing neuronal cell apoptosis. Negatively regulates BAX promoter activity in the absence of TP53. Acts as a transcriptional coactivator via its interaction with the transcription factor ESR1 by enhancing its effect on estrogen response element (ERE)-containing promoter. Antagonizes the transcriptional stimulatory activity of POU4F1 by preventing its binding to an octamer motif. Involved in TNFSF11-mediated terminal osteoclast differentiation. The sequence is that of POU domain, class 4, transcription factor 2 from Rattus norvegicus (Rat).